The chain runs to 391 residues: Acetate kinase (391 aa).

Mg(2+) is bound at residue Asn-4. Residue Lys-11 participates in ATP binding. A substrate-binding site is contributed by Arg-85. The active-site Proton donor/acceptor is the Asp-142. ATP is bound by residues 202 to 206, 277 to 279, and 325 to 329; these read HLGNG, DLR, and GIGEN. A Mg(2+)-binding site is contributed by Glu-378.

The protein belongs to the acetokinase family. Homodimer. It depends on Mg(2+) as a cofactor. Mn(2+) is required as a cofactor.

The protein resides in the cytoplasm. The enzyme catalyses acetate + ATP = acetyl phosphate + ADP. The protein operates within metabolic intermediate biosynthesis; acetyl-CoA biosynthesis; acetyl-CoA from acetate: step 1/2. Functionally, catalyzes the formation of acetyl phosphate from acetate and ATP. Can also catalyze the reverse reaction. The chain is Acetate kinase from Halalkalibacterium halodurans (strain ATCC BAA-125 / DSM 18197 / FERM 7344 / JCM 9153 / C-125) (Bacillus halodurans).